We begin with the raw amino-acid sequence, 122 residues long: MIQKETNLVVADNSGAKKVRCIHVFGGTGRRYAALGDQIMVTVKAAVPNGVVKKKDVCKAVVVRCAKEQRRKDGSYIRFDENAVVLLNAQGEPRGTRIFGPVARELRDKRYMKIVSLAPEVL.

It belongs to the universal ribosomal protein uL14 family. In terms of assembly, part of the 50S ribosomal subunit. Forms a cluster with proteins L3 and L19. In the 70S ribosome, L14 and L19 interact and together make contacts with the 16S rRNA in bridges B5 and B8.

In terms of biological role, binds to 23S rRNA. Forms part of two intersubunit bridges in the 70S ribosome. The polypeptide is Large ribosomal subunit protein uL14 (Chlorobaculum parvum (strain DSM 263 / NCIMB 8327) (Chlorobium vibrioforme subsp. thiosulfatophilum)).